The following is a 390-amino-acid chain: Alkanesulfonate monooxygenase (390 aa).

It belongs to the SsuD family.

It carries out the reaction an alkanesulfonate + FMNH2 + O2 = an aldehyde + FMN + sulfite + H2O + 2 H(+). Catalyzes the desulfonation of aliphatic sulfonates. This is Alkanesulfonate monooxygenase from Cupriavidus taiwanensis (strain DSM 17343 / BCRC 17206 / CCUG 44338 / CIP 107171 / LMG 19424 / R1) (Ralstonia taiwanensis (strain LMG 19424)).